We begin with the raw amino-acid sequence, 890 residues long: Chloroquine resistance transporter (890 aa).

2 disordered regions span residues 1-163 and 280-300; these read MPPA…EAPL and GMQR…AAEG. Topologically, residues 1–349 are cytoplasmic; sequence MPPAHHGSGG…RATRWIDRNA (349 aa). Basic residues predominate over residues 8–19; sequence SGGRRRPGRGNK. 2 stretches are compositionally biased toward low complexity: residues 102–126 and 134–156; these read APSQ…SSRS and SPVA…TSAS. Residues 350–372 form a helical membrane-spanning segment; sequence ATVRVACYTFLLLVTSTGNTICF. Over 373–391 the chain is Vacuolar; that stretch reads KKMIDKMPNYSPCLTQVTT. The helical transmembrane segment at 392–412 threads the bilayer; sequence VVFVPVFFALSLYTDYAGGLP. Residues 413 to 422 lie on the Cytoplasmic side of the membrane; that stretch reads QEMADFPKRN. A helical membrane pass occupies residues 423–443; that stretch reads FAVMGFLDSFSGVMAIIGAVH. Topologically, residues 444–447 are vacuolar; sequence TTGT. The chain crosses the membrane as a helical span at residues 448–468; the sequence is TQVVLQQSCIVFSLLASIVML. Residues 469 to 471 are Cytoplasmic-facing; it reads RKR. The helical transmembrane segment at 472-492 threads the bilayer; that stretch reads FHAAHYLGALVIILGVLVVKL. At 493–505 the chain is on the vacuolar side; it reads PDLLHPSSDGGGD. A helical transmembrane segment spans residues 506–526; the sequence is VFVFNLLYLLSNLPTAVSCVY. Residues 527–544 are Cytoplasmic-facing; it reads KEVAFRGVEMGTNYLQAW. Residues 545 to 565 traverse the membrane as a helical segment; that stretch reads VALFQFLIGFLVLPLNALPVL. The Vacuolar portion of the chain corresponds to 566–614; the sequence is GPQRVPLAELPASLWNGTRCLFGFNTIVTNCGGAGNMESPCDNCEGAWK. Residue Asn581 is glycosylated (N-linked (GlcNAc...) asparagine). 2 disulfide bridges follow: Cys585–Cys609 and Cys596–Cys606. Residues 615 to 634 form a helical membrane-spanning segment; that stretch reads YVGMYLSFNLLYNMFIIFVV. The Cytoplasmic portion of the chain corresponds to 635 to 640; the sequence is KSGGAA. A helical membrane pass occupies residues 641 to 663; sequence LTFLVSTLRLPVTALAFCSRAIM. At 664 to 673 the chain is on the vacuolar side; sequence GDRAVPPKAT. A helical membrane pass occupies residues 674–694; it reads DFYGLLVLILGLVIYRAGGIM. The Cytoplasmic portion of the chain corresponds to 695–890; that stretch reads KRRAQRRAVA…GKSRANNGCI (196 aa). The disordered stretch occupies residues 798-871; that stretch reads AAFTPFTQRM…NRVGGYEPPS (74 aa).

This sequence belongs to the CRT-like transporter family.

The protein resides in the vacuole membrane. Its function is as follows. Nutrient transporter. Involved in maintaining the osmotic homeostasis of the digestive vacuole. Required for the proper organization of the endolysosomal system and, in turn, indirectly for microneme secretion and parasite invasion. Required for bradyzoite viability and cyst development. This is Chloroquine resistance transporter from Toxoplasma gondii.